A 381-amino-acid chain; its full sequence is MNLYRDVLWPLLFSGLRADPEAVKMGLLRALHWIDATQATGILSALERLFCYRDPRLAVSLWGLTFPNPLGLAAGFDKDGLALGVWPSLGFGFVEVGTITPQPQPGNPKPRLFQLPQDRAALNRMGFNNQGAAALAERLRRLQQRPIPIGINLGKAKITPLEEAAADYLASFRLLQDLGDYFVVNVSSPNTPGLRSLQAAEQLEPILSALQRENQKRKPLLVKIAPDLDWPDIDSILELAQDHQLAGIVATNTTLRRDNLKTRFLPGRGIPFAPAESRPILAEAGGISGAPLRERSTQVIRYIHRSTQGKLPIIGVGGIFTLADALEKLEAGASLLQVYTGWVYEGPGMVPQLLRGLARSSPPSPDVTLPPENTPVGQIQA.

FMN contacts are provided by residues 74–78 and T98; that span reads AGFDK. Residue K78 coordinates substrate. 123-127 contributes to the substrate binding site; it reads NRMGF. 2 residues coordinate FMN: N152 and N185. N185 lines the substrate pocket. S188 serves as the catalytic Nucleophile. Substrate is bound at residue N190. FMN is bound by residues K223 and T251. 252 to 253 is a substrate binding site; sequence NT. Residues G289, G318, and 339–340 each bind FMN; that span reads YT. Residues 359–381 are disordered; it reads RSSPPSPDVTLPPENTPVGQIQA.

Belongs to the dihydroorotate dehydrogenase family. Type 2 subfamily. As to quaternary structure, monomer. The cofactor is FMN.

It localises to the cell membrane. The enzyme catalyses (S)-dihydroorotate + a quinone = orotate + a quinol. It participates in pyrimidine metabolism; UMP biosynthesis via de novo pathway; orotate from (S)-dihydroorotate (quinone route): step 1/1. Catalyzes the conversion of dihydroorotate to orotate with quinone as electron acceptor. This chain is Dihydroorotate dehydrogenase (quinone), found in Synechococcus sp. (strain JA-2-3B'a(2-13)) (Cyanobacteria bacterium Yellowstone B-Prime).